Here is an 84-residue protein sequence, read N- to C-terminus: RNA-binding protein Hfq (84 aa).

Positions 9–68 constitute a Sm domain; it reads DPYLNTLRKERVPVSIYLVNGIKLQGQIESFDQFVILLKNTVSQMVYKHAISTVVPSRPV.

Belongs to the Hfq family. Homohexamer.

In terms of biological role, RNA chaperone that binds small regulatory RNA (sRNAs) and mRNAs to facilitate mRNA translational regulation in response to envelope stress, environmental stress and changes in metabolite concentrations. Also binds with high specificity to tRNAs. The sequence is that of RNA-binding protein Hfq from Azotobacter vinelandii (strain DJ / ATCC BAA-1303).